Here is a 345-residue protein sequence, read N- to C-terminus: MSSFVPNKEQTRTVLIFCFHLKKTAAESHRMLVEAFGEQVPTVKKCERWFQRFKSGDFDVDDKEHGKPPKRYEDAELQALLDEDDAQTQKQLAEQLEVSQQAVSNRLREMGKIQKVGRWVPHELNERQMERRKNTCEILLSRYKRKSFLHRIVTGDEKWIFFVSPKRKKSYVDPGQPATSTARPNRFGKKTMLCVWWDQSGVIYYELLKRGETVNTARYQQQLINLNRALQRKRPEYQKRQHRVIFLHDNAPSHTARAVRDTLETLNWEVLPHAAYSPDLAPSDYHLFASMGHALAEQRFDSYESVKKWLDEWFAAKDDEFYWRGIHKLPERWEKCVASDGKYLE.

Residues 1–112 are DNA-binding; sequence MSSFVPNKEQ…VSNRLREMGK (112 aa). 2 consecutive DNA-binding regions (H-T-H motif) follow at residues 24-55 and 89-110; these read TAAESHRMLVEAFGEQVPTVKKCERWFQRFKS and QKQLAEQLEVSQQAVSNRLREM. The linker stretch occupies residues 113 to 125; the sequence is IQKVGRWVPHELN. The catalytic stretch occupies residues 126–345; the sequence is ERQMERRKNT…CVASDGKYLE (220 aa). Mg(2+)-binding residues include aspartate 156, aspartate 249, and aspartate 284.

Homodimer. The complex has a trans arrangement, with each transposon end recognized by the DNA binding region of one transposase monomer and by the active site of the other monomer. Requires Mg(2+) as cofactor. Mn(2+) serves as cofactor.

It localises to the nucleus. Its function is as follows. Mediates transposition of transposon Mos1 by a 'cut and paste' mechanism. Transposases are sequence-specific nucleases and strand transferases that catalyze transposition through an ordered series of events: sequence-specific binding of transposase to the terminal inverted repeats (IR) present at each end of the transposon, pairing of the transposon IRs in a paired-end complex (PEC), cleavage of one or both DNA strands at each transposon end, capture of target DNA, and strand transfer to insert the transposon at a new site. This chain is Mariner Mos1 transposase (mariner\T), found in Drosophila mauritiana (Fruit fly).